A 555-amino-acid chain; its full sequence is Perforin-1 (555 aa).

The N-terminal stretch at 1–21 (MAARLLLLGILLLLLPLPVPA) is a signal peptide. Disulfide bonds link cysteine 23-cysteine 76, cysteine 31-cysteine 73, and cysteine 102-cysteine 176. The MACPF domain occupies 27 to 375 (ARSECKRSHK…QYLTDRARWR (349 aa)). A beta stranded transmembrane segment spans residues 129–149 (WKVGLDVTPKPTSNVHVSVAG). Asparagine 205 carries N-linked (GlcNAc...) asparagine glycosylation. 4 disulfides stabilise this stretch: cysteine 242–cysteine 408, cysteine 377–cysteine 393, cysteine 381–cysteine 395, and cysteine 397–cysteine 407. The chain crosses the membrane as a beta stranded span at residues 257–279 (CLTVEAQVNIGIHGSISAEAKAC). Residues 376-408 (DCSRPCPPGRQKSPRDPCQCVCHGSAVTTQDCC) enclose the EGF-like domain. The C2 domain occupies 397 to 519 (CHGSAVTTQD…CNLNHGHLKF (123 aa)). Residues glycine 429, aspartate 430, threonine 433, alanine 434, aspartate 436, aspartate 484, aspartate 486, aspartate 490, aspartate 491, and aspartate 492 each coordinate Ca(2+). 2 cysteine pairs are disulfide-bonded: cysteine 497-cysteine 510 and cysteine 525-cysteine 534. N-linked (GlcNAc...) asparagine glycosylation is present at asparagine 549.

The protein belongs to the complement C6/C7/C8/C9 family. In terms of assembly, monomer, as soluble protein. Homooligomer; homooligomerizes to form a pore-forming ring. Ca(2+) serves as cofactor. Post-translationally, N-glycosylated.

The protein resides in the cytolytic granule. It localises to the secreted. It is found in the cell membrane. Its subcellular location is the endosome lumen. Its function is as follows. Pore-forming protein that plays a key role in granzyme-mediated programmed cell death, and in defense against virus-infected or neoplastic cells. Plays an important role in killing other cells that are recognized as non-self by the immune system, e.g. in transplant rejection or some forms of autoimmune disease. Can insert into the membrane of target cells in its calcium-bound form, oligomerize and form large pores. Promotes cytolysis and apoptosis of target cells by mediating the passage and uptake of cytotoxic granzymes. Facilitates the delivery of cationic cargo protein, while anionic or neural proteins are not delivered efficiently. Perforin pores allow the release of mature caspase-7 (CASP7) into the extracellular milieu. This Homo sapiens (Human) protein is Perforin-1 (PRF1).